The primary structure comprises 125 residues: Ribosome-binding factor A (125 aa).

The protein belongs to the RbfA family. In terms of assembly, monomer. Binds 30S ribosomal subunits, but not 50S ribosomal subunits or 70S ribosomes.

It localises to the cytoplasm. Its function is as follows. One of several proteins that assist in the late maturation steps of the functional core of the 30S ribosomal subunit. Associates with free 30S ribosomal subunits (but not with 30S subunits that are part of 70S ribosomes or polysomes). Required for efficient processing of 16S rRNA. May interact with the 5'-terminal helix region of 16S rRNA. The protein is Ribosome-binding factor A of Xylella fastidiosa (strain 9a5c).